A 347-amino-acid polypeptide reads, in one-letter code: Cytoplasmic tRNA 2-thiolation protein 1 (347 aa).

Ser200 is subject to Phosphoserine. The tract at residues 315-347 (LAIGKGRRGLDEEGPPREPQPSRPLTSEPVPDF) is disordered.

The protein belongs to the TtcA family. CTU1/NCS6/ATPBD3 subfamily. In terms of assembly, component of a complex at least composed of URM1, CTU2/NCS2 and CTU1/ATPBD3. May form a heterodimer with CTU2/NCS2.

The protein localises to the cytoplasm. The protein operates within tRNA modification; 5-methoxycarbonylmethyl-2-thiouridine-tRNA biosynthesis. In terms of biological role, plays a central role in 2-thiolation of mcm(5)S(2)U at tRNA wobble positions of tRNA(Lys), tRNA(Glu) and tRNA(Gln). Directly binds tRNAs and probably acts by catalyzing adenylation of tRNAs, an intermediate required for 2-thiolation. It is unclear whether it acts as a sulfurtransferase that transfers sulfur from thiocarboxylated URM1 onto the uridine of tRNAs at wobble position. The protein is Cytoplasmic tRNA 2-thiolation protein 1 of Bos taurus (Bovine).